The following is a 219-amino-acid chain: Ribose-5-phosphate isomerase A (219 aa).

Substrate is bound by residues 28-31 (TGST), 81-84 (DGAD), and 94-97 (KGGG). E103 (proton acceptor) is an active-site residue. K121 serves as a coordination point for substrate.

The protein belongs to the ribose 5-phosphate isomerase family. Homodimer.

The catalysed reaction is aldehydo-D-ribose 5-phosphate = D-ribulose 5-phosphate. It participates in carbohydrate degradation; pentose phosphate pathway; D-ribose 5-phosphate from D-ribulose 5-phosphate (non-oxidative stage): step 1/1. In terms of biological role, catalyzes the reversible conversion of ribose-5-phosphate to ribulose 5-phosphate. The protein is Ribose-5-phosphate isomerase A of Pectobacterium carotovorum subsp. carotovorum (strain PC1).